A 256-amino-acid chain; its full sequence is Cysteine-rich repeat secretory protein 42 (256 aa).

The first 26 residues, 1–26, serve as a signal peptide directing secretion; sequence MSSVFGSVHILAMIAIQLLLTHSVSS. 2 consecutive Gnk2-homologous domains span residues 33-136 and 142-253; these read YLHH…SVAS and YEND…LYPF.

Belongs to the cysteine-rich repeat secretory protein family.

It is found in the secreted. This Arabidopsis thaliana (Mouse-ear cress) protein is Cysteine-rich repeat secretory protein 42 (CRRSP42).